A 70-amino-acid chain; its full sequence is Large ribosomal subunit protein bL31 (70 aa).

The Zn(2+) site is built by Cys16, Cys18, Cys38, and Cys41.

This sequence belongs to the bacterial ribosomal protein bL31 family. Type A subfamily. In terms of assembly, part of the 50S ribosomal subunit. Zn(2+) serves as cofactor.

Binds the 23S rRNA. This chain is Large ribosomal subunit protein bL31, found in Bifidobacterium adolescentis (strain ATCC 15703 / DSM 20083 / NCTC 11814 / E194a).